A 312-amino-acid chain; its full sequence is Aspartoacylase (312 aa).

Positions 20 and 23 each coordinate Zn(2+). 3 residues coordinate N-acetyl-L-aspartate: Arg62, Asn69, and Arg70. His115 contributes to the Zn(2+) binding site. Positions 163 and 167 each coordinate N-acetyl-L-aspartate. Residue Glu177 is the Proton donor/acceptor of the active site. Tyr287 lines the N-acetyl-L-aspartate pocket.

Belongs to the AspA/AstE family. Aspartoacylase subfamily. Homodimer. Zn(2+) serves as cofactor.

Its subcellular location is the cytoplasm. The protein localises to the nucleus. It catalyses the reaction an N-acyl-L-aspartate + H2O = a carboxylate + L-aspartate. It carries out the reaction N-acetyl-L-aspartate + H2O = L-aspartate + acetate. In terms of biological role, catalyzes the deacetylation of N-acetylaspartic acid (NAA) to produce acetate and L-aspartate. NAA occurs in high concentration in brain and its hydrolysis NAA plays a significant part in the maintenance of intact white matter. In other tissues it acts as a scavenger of NAA from body fluids. This Mus musculus (Mouse) protein is Aspartoacylase.